The chain runs to 351 residues: Divinyl chlorophyll a/b light-harvesting protein PcbA (351 aa).

6 consecutive transmembrane segments (helical) span residues 27 to 47 (FIAAHAAHTGLIAFWAGAFTL), 64 to 84 (LIALPHLATLGIGFDEAGTFV), 89 to 109 (VTAIAIVHLVLSMVYGAGGLL), 202 to 222 (VMGGHAFLAFFMITGGAFHIA), 242 to 262 (AILSWSLAGIGWMAIVAAFWC), and 305 to 325 (LTNVHYFLGFFYIQGHLWHAL).

It belongs to the PsbB/PsbC family. IsiA/Pcb subfamily. In terms of assembly, the antenna complex consists of divinyl chlorophylls (a and b) and divinyl chlorophyll a/b binding proteins and binds more divinyl chlorophyll b than does the antenna complex from high-light-adapted Prochlorococcus. Divinyl chlorophyll a serves as cofactor. Divinyl chlorophyll b is required as a cofactor.

The protein resides in the cellular thylakoid membrane. The antenna complex functions as a light receptor, it captures and delivers excitation energy to photosystems II and I. The Prochlorales pcb genes are not related to higher plant LHCs. In Prochlorococcus marinus (strain SARG / CCMP1375 / SS120), this protein is Divinyl chlorophyll a/b light-harvesting protein PcbA (pcbA).